A 1912-amino-acid chain; its full sequence is Receptor-type tyrosine-protein phosphatase delta (1912 aa).

The N-terminal stretch at Met-1 to Ala-20 is a signal peptide. The Extracellular segment spans residues Glu-21–Gly-1266. Ig-like C2-type domains follow at residues Pro-24–Thr-114 and Pro-126–Tyr-224. 2 disulfide bridges follow: Cys-45-Cys-98 and Cys-147-Cys-207. A mini-exon peptide A9; sufficient for interaction with IL1RAPL1 region spans residues Glu-181 to Arg-189. A mini-exon peptide B; required for interaction with SLITRK2 and in the function in pre-synaptic differentiation; Acts as an adjustable linker to control relative positions and orientations of the PTPRD second and third immunoglobilin domains for their simultaneous interactions with the first immunoglobilin domain of IL1RAPL1 and IL1RAP; Modulates affinity for IL1RAPL1 and IL1RAP region spans residues Glu-227–Glu-230. The 83-residue stretch at Pro-236 to Thr-318 folds into the Ig-like C2-type 3 domain. 2 N-linked (GlcNAc...) asparagine glycosylation sites follow: Asn-254 and Asn-299. A disulfide bridge links Cys-257 with Cys-302. 8 consecutive Fibronectin type-III domains span residues Pro-325 to Gln-415, Ala-420 to Pro-516, Gln-518 to Ser-607, Pro-612 to Asp-709, Pro-714 to Ala-822, Val-823 to Glu-916, Phe-921 to Val-1016, and Phe-1020 to Asp-1106. 2 N-linked (GlcNAc...) asparagine glycosylation sites follow: Asn-724 and Asn-832. A helical membrane pass occupies residues Leu-1267–Ile-1287. The Cytoplasmic portion of the chain corresponds to Leu-1288–Thr-1912. The tract at residues Glu-1298–Val-1319 is disordered. The segment covering Val-1310–Val-1319 has biased composition (basic and acidic residues). Tyrosine-protein phosphatase domains lie at Phe-1357–Ala-1612 and Met-1644–Tyr-1903. Substrate-binding positions include Asp-1521, Cys-1553–Arg-1559, and Gln-1597. The active-site Phosphocysteine intermediate is Cys-1553. Cys-1844 functions as the Phosphocysteine intermediate in the catalytic mechanism.

This sequence belongs to the protein-tyrosine phosphatase family. Receptor class 2A subfamily. As to quaternary structure, interacts with PPFIA1, PPFIA2 and PPFIA3. Interacts (via extracellular domain) with SLITRK4 (via LRR 1 and 2 repeats). Interacts with SLITRK2; induces presynaptic differentiation. Interacts (via the second immunoglobilin domain) with IL1RAPL1 (via the first immunoglobilin domain); induces pre- and postsynaptic differentiation of neurons and synapse formation. Isoform G, isoform H, isoform I, isoform J, and isoform K do not interact with IL1RAPL1. Interacts (via the third immunoglobilin domain) with IL1RAP (via the first immunoglobilin domain); induces pre- and postsynaptic differentiation of neurons. Post-translationally, a cleavage occurs, separating the extracellular domain from the transmembrane segment. This process called 'ectodomain shedding' is thought to be involved in receptor desensitization, signal transduction and/or membrane localization. In terms of tissue distribution, brain, kidney, heart, and some B-cell lines.

It localises to the membrane. The enzyme catalyses O-phospho-L-tyrosyl-[protein] + H2O = L-tyrosyl-[protein] + phosphate. Can bidirectionally induce pre- and post-synaptic differentiation of neurons by mediating interaction with IL1RAP and IL1RAPL1 trans-synaptically. Involved in pre-synaptic differentiation through interaction with SLITRK2. In Mus musculus (Mouse), this protein is Receptor-type tyrosine-protein phosphatase delta (Ptprd).